A 107-amino-acid polypeptide reads, in one-letter code: Transcriptional regulator Rv3488 (107 aa).

Cd(2+)-binding residues include His-16, Glu-30, His-34, and His-101.

In terms of assembly, homodimer.

Functionally, may have transcription regulation and metal-detoxifying functions through which it may enhance intracellular survival of mycobacteria. Binds to its own promoter region and to the Rv1999c promoter region. It displays strong affinity for cadmium ions, but can also bind zinc, manganese and nickel. Expression increases the intracellular survival of recombinant M.smegmatis in murine macrophage cell line and increases its tolerance to cadmium ions. The sequence is that of Transcriptional regulator Rv3488 from Mycobacterium tuberculosis (strain ATCC 25618 / H37Rv).